We begin with the raw amino-acid sequence, 326 residues long: Serpentine receptor class gamma-14 (326 aa).

7 helical membrane-spanning segments follow: residues 36–56 (QIIY…TILW), 67–83 (FFTL…SILI), 115–135 (IIML…VLLV), 156–176 (LKYV…NIAI), 204–224 (FQLV…AITL), 243–263 (VIIS…SFFF), and 274–294 (GFSF…MICV).

The protein belongs to the nematode receptor-like protein srg family.

It is found in the membrane. The protein is Serpentine receptor class gamma-14 (srg-14) of Caenorhabditis elegans.